A 344-amino-acid polypeptide reads, in one-letter code: D-amino-acid oxidase (344 aa).

FAD contacts are provided by A11, S14, S49, G53, N55, and I167. (R)-lactate contacts are provided by Y229 and R290. Anthranilate contacts are provided by Y229 and R290. FAD-binding residues include R290, S321, G324, Y325, and Q326.

The protein belongs to the DAMOX/DASOX family. FAD is required as a cofactor.

It localises to the peroxisome. The enzyme catalyses a D-alpha-amino acid + O2 + H2O = a 2-oxocarboxylate + H2O2 + NH4(+). The catalysed reaction is D-alanine + O2 + H2O = pyruvate + H2O2 + NH4(+). Functionally, catalyzes the oxidative deamination of D-amino acids with broad substrate specificity. Enables the organism to utilize D-amino acids as a source of nutrients. Enables the organism to utilize D-alanine as a source of nitrogen. This chain is D-amino-acid oxidase, found in Komagataella phaffii (strain GS115 / ATCC 20864) (Yeast).